Consider the following 509-residue polypeptide: Mitogen-activated protein kinase sma-5 (509 aa).

The segment at 19-72 (DPITSMSPPQENRSPKAEYLNNFFNTNPTNGKSRGSQEAPRKPLGQTNLNVQGS) is disordered. Polar residues-rich tracts occupy residues 20 to 30 (PITSMSPPQEN) and 40 to 54 (NFFNTNPTNGKSRGS). The region spanning 105-411 (YEPTQNIGSG…IQDALLHPYI (307 aa)) is the Protein kinase domain. ATP contacts are provided by residues 111-119 (IGSGAFGIV) and Lys134. Asp231 serves as the catalytic Proton acceptor. Residues 460–482 (YSELHSGDSTGSTSDMSTNTSGE) form a disordered region. Over residues 466-481 (GDSTGSTSDMSTNTSG) the composition is skewed to low complexity.

It belongs to the protein kinase superfamily. CMGC Ser/Thr protein kinase family. MAP kinase subfamily. Requires Mg(2+) as cofactor. In terms of tissue distribution, expressed in intestine with a stronger expression in the four most anterior cells, muscles, excretory cell, pharynx and, to a lesser extent, in hypodermis.

The catalysed reaction is L-seryl-[protein] + ATP = O-phospho-L-seryl-[protein] + ADP + H(+). It catalyses the reaction L-threonyl-[protein] + ATP = O-phospho-L-threonyl-[protein] + ADP + H(+). Functionally, serine/threonine-protein kinase involved in the postembryonic regulation of body size, mainly through control of cell growth. In particular, controls the volume of intestine, muscles and hypodermis. In addition, regulates growth, intestinal granule distribution, lifespan and number of offspring. The chain is Mitogen-activated protein kinase sma-5 from Caenorhabditis elegans.